Reading from the N-terminus, the 63-residue chain is uncharacterized protein (63 aa).

This is an uncharacterized protein from Azospirillum brasilense.